We begin with the raw amino-acid sequence, 223 residues long: Probable transaldolase (223 aa).

The Schiff-base intermediate with substrate role is filled by K92.

Belongs to the transaldolase family. Type 3B subfamily.

It localises to the cytoplasm. It catalyses the reaction D-sedoheptulose 7-phosphate + D-glyceraldehyde 3-phosphate = D-erythrose 4-phosphate + beta-D-fructose 6-phosphate. It functions in the pathway carbohydrate degradation; pentose phosphate pathway; D-glyceraldehyde 3-phosphate and beta-D-fructose 6-phosphate from D-ribose 5-phosphate and D-xylulose 5-phosphate (non-oxidative stage): step 2/3. Functionally, transaldolase is important for the balance of metabolites in the pentose-phosphate pathway. This Thermus thermophilus (strain ATCC BAA-163 / DSM 7039 / HB27) protein is Probable transaldolase.